A 135-amino-acid polypeptide reads, in one-letter code: Evasin P1134 (135 aa).

Residues 1–31 form the signal peptide; sequence MEVKTFAFLQIAVFIALGIQIFAAVTAAADA. Intrachain disulfides connect cysteine 41/cysteine 63, cysteine 45/cysteine 65, and cysteine 56/cysteine 76. The N-linked (GlcNAc...) asparagine glycan is linked to asparagine 44. A disordered region spans residues 88-112; that stretch reads ETPSNSDLEAATPRPRKTLYPVRNP.

It localises to the secreted. Functionally, salivary chemokine-binding protein which binds to host chemokine CXCL1. The sequence is that of Evasin P1134 from Ixodes ricinus (Common tick).